The primary structure comprises 360 residues: GDSL esterase/lipase At1g06990 (360 aa).

Positions 1–22 (MLIHVIIFMIITTMQFSTTCHA) are cleaved as a signal peptide. Residues N26 and N31 are each glycosylated (N-linked (GlcNAc...) asparagine). S44 acts as the Nucleophile in catalysis. N-linked (GlcNAc...) asparagine glycans are attached at residues N73, N126, and N272. Active-site residues include D335 and H338.

Belongs to the 'GDSL' lipolytic enzyme family.

The protein localises to the secreted. The polypeptide is GDSL esterase/lipase At1g06990 (Arabidopsis thaliana (Mouse-ear cress)).